Here is an 842-residue protein sequence, read N- to C-terminus: GPI ethanolamine phosphate transferase 2 (842 aa).

A glycan (N-linked (GlcNAc...) asparagine) is linked at Asn186. Residues 409–429 (YNYPLLFIGCFLSIVITGTIY) form a helical membrane-spanning segment. Asn441 carries an N-linked (GlcNAc...) asparagine glycan. 2 helical membrane passes run 442–462 (TSILIAIAALMGISVFGSSFI) and 468–488 (FWWWIITGLVLLSMVNLNFSS). An N-linked (GlcNAc...) asparagine glycan is attached at Asn506. A helical transmembrane segment spans residues 524-544 (GNIDALWWLNLITVTVVGLNL). A glycan (N-linked (GlcNAc...) asparagine) is linked at Asn551. Residues 554 to 574 (VSLLGFSDLLSMGLLSMITFL) traverse the membrane as a helical segment. A glycan (N-linked (GlcNAc...) asparagine) is linked at Asn578. 3 helical membrane-spanning segments follow: residues 615-635 (IHTALIPLARIFFKLFFAVLV), 698-718 (YLLAVIFGIILQFFTFFQSGG), and 740-760 (IYVVGLMMCISNFAPTIYWSF). Asn771 carries an N-linked (GlcNAc...) asparagine glycan. 2 helical membrane passes run 783–803 (YPFIIIQSTIGCCLLLACIIL) and 821–841 (MVWTIFVGIIVHWIPEILLLL).

It belongs to the PIGG/PIGN/PIGO family. PIGG subfamily.

The protein resides in the endoplasmic reticulum membrane. Its pathway is glycolipid biosynthesis; glycosylphosphatidylinositol-anchor biosynthesis. Functionally, ethanolamine phosphate transferase involved in glycosylphosphatidylinositol-anchor biosynthesis. Transfers ethanolamine phosphate to the GPI second mannose. The protein is GPI ethanolamine phosphate transferase 2 (LAS21) of Candida glabrata (strain ATCC 2001 / BCRC 20586 / JCM 3761 / NBRC 0622 / NRRL Y-65 / CBS 138) (Yeast).